The chain runs to 394 residues: Na(+)/H(+) antiporter NhaA (394 aa).

The next 11 helical transmembrane spans lie at 14–34 (AGGL…NSAL), 59–79 (LLLW…GLEV), 95–115 (VFPA…YLLF), 125–145 (GWAI…ALLG), 154–174 (VFLL…IALF), 179–199 (VSLQ…YMNW), 213–233 (LVLW…GVIV), 254–274 (GLHP…NAGV), 292–312 (IATG…WLAV), 328–348 (IFAV…IASL), and 363–383 (LGIL…LRLV).

The protein belongs to the NhaA Na(+)/H(+) (TC 2.A.33) antiporter family.

The protein resides in the cell inner membrane. It carries out the reaction Na(+)(in) + 2 H(+)(out) = Na(+)(out) + 2 H(+)(in). In terms of biological role, na(+)/H(+) antiporter that extrudes sodium in exchange for external protons. This chain is Na(+)/H(+) antiporter NhaA, found in Yersinia pestis bv. Antiqua (strain Antiqua).